We begin with the raw amino-acid sequence, 1147 residues long: uncharacterized protein (1147 aa).

7 disordered regions span residues 226–245, 255–297, 431–617, 647–670, 705–945, 1003–1032, and 1060–1090; these read FGQGQQDLDEGEAGAGGQVD, IQGT…QEKA, SQHP…QSCI, EEMDDHEEGGELRENHPDAQDPVR, HRHR…RRLQ, RQQQEEFRRKCQELQRKKQQEEAERAEAEK, and YQRRKQEAEEKTRWEAEDRRQKEKEAARLAQ. Basic and acidic residues predominate over residues 268-296; the sequence is WQKDETQTEDTSKDNHHCIHTSKENHQEK. Basic residues predominate over residues 431 to 441; the sequence is SQHPPKGKAQR. Over residues 538-549 the composition is skewed to low complexity; that stretch reads PAGGALPAAGQA. A compositionally biased stretch (polar residues) spans 584–603; that stretch reads LNETSPLTQKPENQGAQQSL. A compositionally biased stretch (polar residues) spans 743 to 752; it reads NQKTSNNISN. Residues 743 to 804 are a coiled coil; it reads NQKTSNNISN…ESKAEKKSQL (62 aa). The segment covering 768–802 has biased composition (basic and acidic residues); that stretch reads TDKSKAPKREKEGKLHEEAEAAVGKSKESKAEKKS. A compositionally biased stretch (basic residues) spans 807–819; the sequence is KGKKTGAKGKRTR. Residues 870–884 are compositionally biased toward polar residues; the sequence is SQVSIDGRSSPTQTA. Over residues 895–945 the composition is skewed to basic and acidic residues; the sequence is DRSHEDPSKAFLVKREQEKASRDRLRAERAEMRRLEVERKRREQEEQRRLQ. Residues 907-1112 are a coiled coil; that stretch reads VKREQEKASR…QKDALKKHLH (206 aa).

This is an uncharacterized protein from Bos taurus (Bovine).